A 1032-amino-acid chain; its full sequence is Suppression of tumorigenicity 18 protein (1032 aa).

Disordered stretches follow at residues 29–76 (RAEE…TNDH), 162–213 (GRDK…LTYN), and 325–354 (RQPK…AKCP). Residues 40 to 51 (NKRKSLLMKPRH) are compositionally biased toward basic residues. Residues 52–76 (YSPDMDCKENPDNRNEDDGLETNDH) are compositionally biased toward basic and acidic residues. 6 consecutive CCHHC-type zinc fingers follow at residues 344-387 (PRPE…PLEI), 388-431 (LAMH…KLAM), 700-743 (RDLK…LKSL), 744-787 (MAAN…GIKM), 792-835 (EEKE…QKEN), and 845-888 (KLNK…IKKV). The Zn(2+) site is built by Cys-353, Cys-358, His-371, Cys-377, Cys-397, Cys-402, His-415, Cys-421, Cys-709, Cys-714, His-727, Cys-733, Cys-753, Cys-758, His-771, Cys-777, Cys-801, Cys-806, His-819, Cys-825, Cys-854, Cys-859, His-872, and Cys-878. Residues 905–974 (IEGDEEIRHL…KELAGLSQAL (70 aa)) are a coiled coil.

It belongs to the MYT1 family. Detected in brain.

Its subcellular location is the nucleus. Functionally, repressor that binds to DNA sequences containing a bipartite element consisting of a direct repeat of the sequence 5'-AAAGTTT-3' separated by 2-9 nucleotides. Represses basal transcription activity from target promoters. The chain is Suppression of tumorigenicity 18 protein (St18) from Rattus norvegicus (Rat).